Consider the following 468-residue polypeptide: Phosphatidylglycerol--prolipoprotein diacylglyceryl transferase (468 aa).

3 helical membrane passes run 21 to 41 (LPVR…LLIG), 56 to 76 (YDIA…YHLA), and 96 to 116 (IWDG…GAWI). Residue Arg144 coordinates a 1,2-diacyl-sn-glycero-3-phospho-(1'-sn-glycerol). 3 consecutive transmembrane segments (helical) span residues 192–212 (VVQP…VALI), 218–238 (FIIG…AGRF), and 256–276 (INSF…ILAP). Residues 349–468 (VVQVADRDGE…RWWRLRRRRQ (120 aa)) are disordered. A compositionally biased stretch (low complexity) spans 391-406 (AEAASAAPEEPAALAS). Residues 445–455 (DGIRRQDDFSS) show a composition bias toward basic and acidic residues. The segment covering 456 to 468 (RRRRWWRLRRRRQ) has biased composition (basic residues).

This sequence belongs to the Lgt family.

It localises to the cell membrane. It catalyses the reaction L-cysteinyl-[prolipoprotein] + a 1,2-diacyl-sn-glycero-3-phospho-(1'-sn-glycerol) = an S-1,2-diacyl-sn-glyceryl-L-cysteinyl-[prolipoprotein] + sn-glycerol 1-phosphate + H(+). The protein operates within protein modification; lipoprotein biosynthesis (diacylglyceryl transfer). Its function is as follows. Catalyzes the transfer of the diacylglyceryl group from phosphatidylglycerol to the sulfhydryl group of the N-terminal cysteine of a prolipoprotein, the first step in the formation of mature lipoproteins. This is Phosphatidylglycerol--prolipoprotein diacylglyceryl transferase from Mycobacterium bovis (strain ATCC BAA-935 / AF2122/97).